We begin with the raw amino-acid sequence, 96 residues long: UPF0235 protein YggU (96 aa).

It belongs to the UPF0235 family.

The chain is UPF0235 protein YggU from Salmonella newport (strain SL254).